A 209-amino-acid polypeptide reads, in one-letter code: Outer-membrane lipoprotein LolB (209 aa).

The signal sequence occupies residues 1-17; sequence MKKSTLLFSLMAMALSG. Cysteine 18 is lipidated: N-palmitoyl cysteine. Cysteine 18 is lipidated: S-diacylglycerol cysteine.

The protein belongs to the LolB family. Monomer.

The protein resides in the cell outer membrane. Its function is as follows. Plays a critical role in the incorporation of lipoproteins in the outer membrane after they are released by the LolA protein. This Haemophilus ducreyi (strain 35000HP / ATCC 700724) protein is Outer-membrane lipoprotein LolB.